Reading from the N-terminus, the 693-residue chain is Glycine--tRNA ligase beta subunit (693 aa).

This sequence belongs to the class-II aminoacyl-tRNA synthetase family. Tetramer of two alpha and two beta subunits.

The protein localises to the cytoplasm. The enzyme catalyses tRNA(Gly) + glycine + ATP = glycyl-tRNA(Gly) + AMP + diphosphate. The sequence is that of Glycine--tRNA ligase beta subunit from Vibrio vulnificus (strain YJ016).